Here is a 197-residue protein sequence, read N- to C-terminus: Guanylate kinase (197 aa).

At Ser2 the chain carries N-acetylserine. A Guanylate kinase-like domain is found at 4–186; the sequence is PRPVVLSGPS…AYAELKEALS (183 aa). An ATP-binding site is contributed by 14 to 19; the sequence is GAGKST. Residue 37-51 participates in substrate binding; the sequence is SHTTRNPRPGEENGK. Active-site residues include Arg44, Arg137, and Arg148. Position 137 (Arg137) interacts with ATP. 171–172 provides a ligand contact to ATP; it reads ND.

The protein belongs to the guanylate kinase family. As to quaternary structure, monomer. Interacts with RD3. As to expression, widely expressed.

Its subcellular location is the photoreceptor inner segment. The protein localises to the cytoplasm. It localises to the cytosol. The protein resides in the mitochondrion. The catalysed reaction is GMP + ATP = GDP + ADP. Up-regulated by RD3. Functionally, catalyzes the phosphorylation of GMP to GDP. Essential enzyme for recycling GMP and indirectly, cyclic GMP (cGMP). Involved in the cGMP metabolism in photoreceptors. It may also have a role in the survival and growth progression of some tumors. In addition to its physiological role, GUK1 is essential for converting prodrugs used for the treatment of cancers and viral infections into their pharmacologically active metabolites, most notably acyclovir, ganciclovir, and 6-thioguanine and its closely related analog 6-mercaptopurine. This is Guanylate kinase from Homo sapiens (Human).